The chain runs to 406 residues: Exo-alpha-sialidase (406 aa).

An N-terminal signal peptide occupies residues 1-20 (MQSMRFMILALLVQFLPAWA). Substrate contacts are provided by R59, R78, D84, and Q148. N235 carries an N-linked (GlcNAc...) asparagine glycan. Residues R265, R322, 322 to 323 (RR), 331 to 332 (YD), K337, Y358, D376, and 376 to 378 (DFF) each bind substrate. A glycan (N-linked (GlcNAc...) asparagine) is linked at N396.

Belongs to the glycosyl hydrolase 33 family.

It carries out the reaction Hydrolysis of alpha-(2-&gt;3)-, alpha-(2-&gt;6)-, alpha-(2-&gt;8)- glycosidic linkages of terminal sialic acid residues in oligosaccharides, glycoproteins, glycolipids, colominic acid and synthetic substrates.. In terms of biological role, sialidase is able to release sialic acid from a wide variety of natural substrates including bovine salivary mucin, colominic acid, bovine fetuin, a serum glycoprotein containing both alpha-2-6 and alpha-2-3-linkages in a ratio of about 3:2, and glycoproteins and glycolipids from thermally denatured human lung epithelial cells. Does not show any trans-sialidase activity since it is able to remove terminal sialic acid residues but is unable to catalyze their transfer to the acceptor substrate. 2-keto-3-deoxynononic acid (KDN) is the preferred substrate and A.fumigatus can utilize KDN as a sole carbon source. In Aspergillus fumigatus (strain ATCC MYA-4609 / CBS 101355 / FGSC A1100 / Af293) (Neosartorya fumigata), this protein is Exo-alpha-sialidase.